Consider the following 122-residue polypeptide: Large ribosomal subunit protein uL24 (122 aa).

The protein belongs to the universal ribosomal protein uL24 family. In terms of assembly, part of the 50S ribosomal subunit.

Functionally, one of two assembly initiator proteins, it binds directly to the 5'-end of the 23S rRNA, where it nucleates assembly of the 50S subunit. Its function is as follows. Located at the polypeptide exit tunnel on the outside of the subunit. This chain is Large ribosomal subunit protein uL24, found in Pyrobaculum arsenaticum (strain DSM 13514 / JCM 11321 / PZ6).